We begin with the raw amino-acid sequence, 264 residues long: NAD-capped RNA hydrolase NudC (264 aa).

Arginine 70 contributes to the substrate binding site. 2 residues coordinate Zn(2+): cysteine 99 and cysteine 102. Glutamate 112 contacts substrate. Zn(2+) is bound by residues cysteine 117 and cysteine 122. Residue tyrosine 127 participates in substrate binding. One can recognise a Nudix hydrolase domain in the interval 128-257 (PVICPSIIVA…TIALKLINAT (130 aa)). Positions 166, 182, and 186 each coordinate a divalent metal cation. The Nudix box signature appears at 167-188 (GFVEIGESFEQTVEREVFEETG). 200 to 207 (QPWAFPNS) serves as a coordination point for substrate. Glutamate 227 contributes to the a divalent metal cation binding site. Residue alanine 250 participates in substrate binding.

It belongs to the Nudix hydrolase family. NudC subfamily. As to quaternary structure, homodimer. The cofactor is Mg(2+). It depends on Mn(2+) as a cofactor. Zn(2+) serves as cofactor.

It carries out the reaction a 5'-end NAD(+)-phospho-ribonucleoside in mRNA + H2O = a 5'-end phospho-adenosine-phospho-ribonucleoside in mRNA + beta-nicotinamide D-ribonucleotide + 2 H(+). The catalysed reaction is NAD(+) + H2O = beta-nicotinamide D-ribonucleotide + AMP + 2 H(+). It catalyses the reaction NADH + H2O = reduced beta-nicotinamide D-ribonucleotide + AMP + 2 H(+). MRNA decapping enzyme that specifically removes the nicotinamide adenine dinucleotide (NAD) cap from a subset of mRNAs by hydrolyzing the diphosphate linkage to produce nicotinamide mononucleotide (NMN) and 5' monophosphate mRNA. The NAD-cap is present at the 5'-end of some mRNAs and stabilizes RNA against 5'-processing. Has preference for mRNAs with a 5'-end purine. Catalyzes the hydrolysis of a broad range of dinucleotide pyrophosphates. The polypeptide is NAD-capped RNA hydrolase NudC (Actinobacillus succinogenes (strain ATCC 55618 / DSM 22257 / CCUG 43843 / 130Z)).